A 472-amino-acid chain; its full sequence is Siroheme synthase 1 (472 aa).

Residues 1–203 are precorrin-2 dehydrogenase /sirohydrochlorin ferrochelatase; sequence MDYLPLFADL…GQLTEAENEL (203 aa). NAD(+) contacts are provided by residues 22 to 23 and 43 to 44; these read EV and QT. At serine 128 the chain carries Phosphoserine. The segment at 215 to 472 is uroporphyrinogen-III C-methyltransferase; sequence GEVALVGAGP…AISPSVVNLA (258 aa). An S-adenosyl-L-methionine-binding site is contributed by proline 224. Residue aspartate 247 is the Proton acceptor of the active site. Lysine 269 serves as the catalytic Proton donor. S-adenosyl-L-methionine-binding positions include 300 to 302, isoleucine 305, 330 to 331, methionine 382, and glycine 411; these read GGD and TA.

The protein in the N-terminal section; belongs to the precorrin-2 dehydrogenase / sirohydrochlorin ferrochelatase family. This sequence in the C-terminal section; belongs to the precorrin methyltransferase family.

The enzyme catalyses uroporphyrinogen III + 2 S-adenosyl-L-methionine = precorrin-2 + 2 S-adenosyl-L-homocysteine + H(+). The catalysed reaction is precorrin-2 + NAD(+) = sirohydrochlorin + NADH + 2 H(+). It carries out the reaction siroheme + 2 H(+) = sirohydrochlorin + Fe(2+). It participates in cofactor biosynthesis; adenosylcobalamin biosynthesis; precorrin-2 from uroporphyrinogen III: step 1/1. It functions in the pathway cofactor biosynthesis; adenosylcobalamin biosynthesis; sirohydrochlorin from precorrin-2: step 1/1. The protein operates within porphyrin-containing compound metabolism; siroheme biosynthesis; precorrin-2 from uroporphyrinogen III: step 1/1. Its pathway is porphyrin-containing compound metabolism; siroheme biosynthesis; siroheme from sirohydrochlorin: step 1/1. It participates in porphyrin-containing compound metabolism; siroheme biosynthesis; sirohydrochlorin from precorrin-2: step 1/1. In terms of biological role, multifunctional enzyme that catalyzes the SAM-dependent methylations of uroporphyrinogen III at position C-2 and C-7 to form precorrin-2 via precorrin-1. Then it catalyzes the NAD-dependent ring dehydrogenation of precorrin-2 to yield sirohydrochlorin. Finally, it catalyzes the ferrochelation of sirohydrochlorin to yield siroheme. The sequence is that of Siroheme synthase 1 from Yersinia pestis bv. Antiqua (strain Nepal516).